The primary structure comprises 452 residues: AP-4 complex subunit mu-1 (452 aa).

Positions 184–451 (KNEVFLDVVE…LSHSDAYVIR (268 aa)) constitute an MHD domain.

This sequence belongs to the adaptor complexes medium subunit family. In terms of assembly, adaptor protein complex 4 (AP-4) is a heterotetramer composed of two large adaptins (epsilon-type subunit AP4E1 and beta-type subunit AP4B1), a medium adaptin (mu-type subunit AP4M1) and a small adaptin (sigma-type AP4S1). Interacts with tyrosine-based sorting signals on the cytoplasmic tail of cargo proteins such as APP, ATG9A, LAMP2 and NAGPA. Interacts with the C-terminal domain of GRID2. Interacts with GRIA1 and GRIA2; the interaction is indirect via CACNG3. Interacts with CACNG3; CACNG3 associates GRIA1 and GRIA2 with the adaptor protein complex 4 (AP-4) to target them to the somatodendritic compartment of neurons. Interacts with HOOK1 and HOOK2; the interactions are direct, mediate the interaction between FTS-Hook-FHIP (FHF) complex and AP-4 and the perinuclear distribution of AP-4.

It localises to the golgi apparatus. The protein localises to the trans-Golgi network membrane. It is found in the early endosome. Functionally, component of the adaptor protein complex 4 (AP-4). Adaptor protein complexes are vesicle coat components involved both in vesicle formation and cargo selection. They control the vesicular transport of proteins in different trafficking pathways. AP-4 forms a non clathrin-associated coat on vesicles departing the trans-Golgi network (TGN) and may be involved in the targeting of proteins from the trans-Golgi network (TGN) to the endosomal-lysosomal system. It is also involved in protein sorting to the basolateral membrane in epithelial cells and the proper asymmetric localization of somatodendritic proteins in neurons. Within AP-4, the mu-type subunit AP4M1 is directly involved in the recognition and binding of tyrosine-based sorting signals found in the cytoplasmic part of cargos. The adaptor protein complex 4 (AP-4) may also recognize other types of sorting signal. The chain is AP-4 complex subunit mu-1 from Canis lupus familiaris (Dog).